The sequence spans 930 residues: Urea transporter 2 (930 aa).

The segment covering 1–11 (MSDHHPLKEMS) has biased composition (basic and acidic residues). Positions 1–90 (MSDHHPLKEM…KRRESEVSRR (90 aa)) are disordered. 2 stretches are compositionally biased toward low complexity: residues 12 to 25 (DSNS…PLSS) and 32 to 43 (SELSSPTWPSSS). The span at 56-89 (PEEKDLRSSDEDSHIVKIEKPNERNKRRESEVSR) shows a compositional bias: basic and acidic residues. 8 helical membrane-spanning segments follow: residues 145 to 165 (ISGL…TIAG), 185 to 205 (AIAS…MAVF), 213 to 233 (WWLL…SSAL), 242 to 262 (LPVF…ATGH), 280 to 300 (NITW…VGVG), 311 to 331 (GGVI…HAAI), 350 to 372 (IYLG…MFYA), and 401 to 421 (VVGV…FLLL). The segment at 452–479 (SEEEKSPNGGSGEQSHGSGQWKAEESSE) is disordered. A Phosphoserine modification is found at serine 487. Helical transmembrane passes span 610–630 (GILI…SGCL), 648–668 (AIAA…MAVF), 676–696 (WWLL…SSAL), and 705–725 (LPVF…ATGH). Residue asparagine 743 is glycosylated (N-linked (GlcNAc...) asparagine). Transmembrane regions (helical) follow at residues 774–794 (GGIF…HAAI), 813–833 (IYFG…GGMF), 842–862 (LLAI…ANML), and 864–884 (VFGL…FLLL).

It belongs to the urea transporter family. As to expression, highly expressed in kidney medulla (at protein level). Also detected in testes, heart, brain and liver (at protein level). In the kidney, present in thin descending limbs of the loop of Henle and in the middle and terminal inner medullary collecting ducts. In terms of tissue distribution, expressed in the kidney medulla. Expressed in the peritubular myoid cells forming the outermost layer of the seminiferous tubules within the testes and is not detected in kidney. Expression levels are coordinated with the stage of testes development and increase 15 days postpartum, commensurate with the start of seminiferous tubule fluid movement.

Its subcellular location is the apical cell membrane. It localises to the basolateral cell membrane. The enzyme catalyses urea(in) = urea(out). Inhibited by phloretin. Activated by forskolin, 3-isobutyl-1-methylxanthine (IBMX) and cAMP. With respect to regulation, inhibited by phloretin. Its activity is regulated as follows. Inhibited by phloretin. Activated by forskolin, 3-isobutyl-1-methylxanthine (IBMX) and cAMP. In terms of biological role, mediates the transport of urea driven by a concentration gradient across the cell membrane of the renal inner medullary collecting duct which is critical to the urinary concentrating mechanism. Functionally, mediates the transport of urea driven by a concentration gradient across the cell membrane. Implicated in the urea movement across the blood-testis barrier and does not translocate water. The sequence is that of Urea transporter 2 (Slc14a2) from Mus musculus (Mouse).